The following is a 267-amino-acid chain: V-type proton ATPase subunit D (267 aa).

It belongs to the V-ATPase D subunit family. V-ATPase is a heteromultimeric enzyme composed of a peripheral catalytic V1 complex (components A to H) attached to an integral membrane V0 proton pore complex (components: a, c, c', c'', d, e, f and VOA1).

It is found in the vacuole membrane. In terms of biological role, subunit of the V1 complex of vacuolar(H+)-ATPase (V-ATPase), a multisubunit enzyme composed of a peripheral complex (V1) that hydrolyzes ATP and a membrane integral complex (V0) that translocates protons. V-ATPase is responsible for acidifying and maintaining the pH of intracellular compartments. In Candida albicans (strain SC5314 / ATCC MYA-2876) (Yeast), this protein is V-type proton ATPase subunit D (VMA8).